The following is a 160-amino-acid chain: MMPAKLQLDVLRTLQSSARHGTQTLKNSNFLERFHKDRIVFCLPFFPALFFVPVQKVLQHLCLRFTQVAPYFIIQLFDLPSRHAENLAPLLASCRIQYTNCFSSSSNGQVPSIISLYLRVDLSPFYAKKFQIPYRVPMIWLDVFQVFFVFLVISQHSLHS.

Helical transmembrane passes span 39-59 (IVFCLPFFPALFFVPVQKVLQ) and 136-156 (VPMIWLDVFQVFFVFLVISQH).

Belongs to the UPF0479 family.

The protein localises to the membrane. This Saccharomyces cerevisiae (strain ATCC 204508 / S288c) (Baker's yeast) protein is Putative UPF0479 protein YNL339W-B.